A 313-amino-acid chain; its full sequence is UPF0761 membrane protein VS_0126 (313 aa).

A run of 6 helical transmembrane segments spans residues Tyr-41 to Leu-61, Met-104 to Asp-124, Ala-139 to Ala-159, Val-185 to Val-205, Ala-217 to Ile-237, and Ala-249 to Val-269. Residues Glu-281–Val-290 show a composition bias toward polar residues. The interval Glu-281 to Lys-313 is disordered.

Belongs to the UPF0761 family.

It localises to the cell inner membrane. This chain is UPF0761 membrane protein VS_0126, found in Vibrio atlanticus (strain LGP32) (Vibrio splendidus (strain Mel32)).